We begin with the raw amino-acid sequence, 746 residues long: Alpha-1,4-glucan:maltose-1-phosphate maltosyltransferase (746 aa).

A disordered region spans residues 1 to 43 (MAAVQHRATTRTSNTDNSTTKTKSKATSARKSPATKRKRVSAE). A compositionally biased stretch (low complexity) spans 10–32 (TRTSNTDNSTTKTKSKATSARKS). The alpha-maltose 1-phosphate site is built by Lys-343, Gln-403, and Asp-438. Catalysis depends on Asp-473, which acts as the Nucleophile. Residue Asn-474 participates in alpha-maltose 1-phosphate binding. Glu-502 functions as the Proton donor in the catalytic mechanism. 612 to 613 (KY) is an alpha-maltose 1-phosphate binding site.

It belongs to the glycosyl hydrolase 13 family. GlgE subfamily. In terms of assembly, homodimer.

The catalysed reaction is alpha-maltose 1-phosphate + [(1-&gt;4)-alpha-D-glucosyl](n) = [(1-&gt;4)-alpha-D-glucosyl](n+2) + phosphate. Its function is as follows. Maltosyltransferase that uses maltose 1-phosphate (M1P) as the sugar donor to elongate linear or branched alpha-(1-&gt;4)-glucans. Is involved in a branched alpha-glucan biosynthetic pathway from trehalose, together with TreS, Mak and GlgB. The protein is Alpha-1,4-glucan:maltose-1-phosphate maltosyltransferase of Bifidobacterium longum (strain NCC 2705).